The following is a 304-amino-acid chain: ADP-polyphosphate phosphotransferase (304 aa).

This sequence belongs to the polyphosphate kinase 2 (PPK2) family. Class I subfamily.

It catalyses the reaction [phosphate](n) + ATP = [phosphate](n+1) + ADP. In terms of biological role, uses inorganic polyphosphate (polyP) as a donor to convert ADP to ATP. The protein is ADP-polyphosphate phosphotransferase of Pseudomonas aeruginosa (strain ATCC 15692 / DSM 22644 / CIP 104116 / JCM 14847 / LMG 12228 / 1C / PRS 101 / PAO1).